Reading from the N-terminus, the 94-residue chain is uncharacterized protein (94 aa).

The HTH cro/C1-type domain maps to 13-67; the sequence is IQESLDELNVSLREFARAMEIAPSTASRLLTGKAALTPEMAIKLSVVIGSSPQMW. Positions 24–43 form a DNA-binding region, H-T-H motif; the sequence is LREFARAMEIAPSTASRLLT.

It belongs to the VapA/VapI family.

This is an uncharacterized protein from Escherichia coli (strain K12).